Consider the following 321-residue polypeptide: Thymidylate synthase (321 aa).

The disordered stretch occupies residues 1–32 (MVLTPTKDGPDQESMPLPADNGESPSKQQAPV). Phosphoserine is present on residues serine 24 and serine 26. Position 39 is a phosphotyrosine (tyrosine 39). Residues arginine 56 and 181-182 (RR) contribute to the dUMP site. Cysteine 201 serves as the catalytic Nucleophile. At tyrosine 208 the chain carries Phosphotyrosine. Serine 210 is subject to Phosphoserine. Residues 223–226 (RSAD), asparagine 234, and 264–266 (HVY) contribute to the dUMP site. Aspartate 226 contacts (6R)-5,10-methylene-5,6,7,8-tetrahydrofolate. Position 320 (alanine 320) interacts with (6R)-5,10-methylene-5,6,7,8-tetrahydrofolate.

The protein belongs to the thymidylate synthase family. As to quaternary structure, homodimer.

It catalyses the reaction dUMP + (6R)-5,10-methylene-5,6,7,8-tetrahydrofolate = 7,8-dihydrofolate + dTMP. It participates in pyrimidine metabolism; dTTP biosynthesis. This is Thymidylate synthase (Ts) from Drosophila melanogaster (Fruit fly).